Consider the following 397-residue polypeptide: MNENIAEKFRADGVARPNWSAVFAVAFCVACLITVEFLPVSLLTPMAQDLGISEGVAGQSVTVTAFVAMFSSLFITQIIQATDRRYIVILFAVLLTASCLMVSFANSFTLLLLGRACLGLALGGFWAMSASLTMRLVPARTVPKALSVIFGAVSIALVIAAPLGSFLGGIIGWRNVFNAAAVMGVLCVIWVVKSLPSLPGEPSHQKQNMFSLLQRPGVMAGMIAIFMSFAGQFAFFTYIRPVYMNLAGFDVDGLTLVLLSFGIASFVGTSFSSYVLKRSVKLALAGAPLLLALSALTLIVWGSDKTVAAVIAIIWGLAFALVPVGWSTWITRSLADQAEKAGSIQVAVIQLANTCGAAVGGYALDNFGLLSPLALSGGLMLLTALVVAAKVRITPMS.

At 1–21 (MNENIAEKFRADGVARPNWSA) the chain is on the cytoplasmic side. A helical membrane pass occupies residues 22-42 (VFAVAFCVACLITVEFLPVSL). At 43–54 (LTPMAQDLGISE) the chain is on the periplasmic side. A helical transmembrane segment spans residues 55-75 (GVAGQSVTVTAFVAMFSSLFI). Residues 76–85 (TQIIQATDRR) lie on the Cytoplasmic side of the membrane. The helical transmembrane segment at 86 to 106 (YIVILFAVLLTASCLMVSFAN) threads the bilayer. A topological domain (periplasmic) is located at residue serine 107. The chain crosses the membrane as a helical span at residues 108 to 128 (FTLLLLGRACLGLALGGFWAM). Over 129-147 (SASLTMRLVPARTVPKALS) the chain is Cytoplasmic. Residues 148–168 (VIFGAVSIALVIAAPLGSFLG) form a helical membrane-spanning segment. Topologically, residues 169 to 175 (GIIGWRN) are periplasmic. The chain crosses the membrane as a helical span at residues 176–196 (VFNAAAVMGVLCVIWVVKSLP). Topologically, residues 197–215 (SLPGEPSHQKQNMFSLLQR) are cytoplasmic. Residues 216-236 (PGVMAGMIAIFMSFAGQFAFF) form a helical membrane-spanning segment. Residues 237–255 (TYIRPVYMNLAGFDVDGLT) are Periplasmic-facing. Residues 256 to 276 (LVLLSFGIASFVGTSFSSYVL) traverse the membrane as a helical segment. At 277–281 (KRSVK) the chain is on the cytoplasmic side. A helical membrane pass occupies residues 282–302 (LALAGAPLLLALSALTLIVWG). Over 303–305 (SDK) the chain is Periplasmic. A helical membrane pass occupies residues 306-326 (TVAAVIAIIWGLAFALVPVGW). Topologically, residues 327 to 343 (STWITRSLADQAEKAGS) are cytoplasmic. A helical transmembrane segment spans residues 344-364 (IQVAVIQLANTCGAAVGGYAL). The Periplasmic segment spans residues 365 to 366 (DN). A helical transmembrane segment spans residues 367 to 387 (FGLLSPLALSGGLMLLTALVV). The Cytoplasmic segment spans residues 388–397 (AAKVRITPMS).

The protein belongs to the major facilitator superfamily. DHA1 family. NepI (TC 2.A.1.2.26) subfamily.

It is found in the cell inner membrane. The enzyme catalyses inosine(in) + H(+)(out) = inosine(out) + H(+)(in). It catalyses the reaction guanosine(in) + H(+)(out) = guanosine(out) + H(+)(in). Its function is as follows. Involved in the efflux of purine ribonucleosides, such as inosine and guanosine. This Salmonella paratyphi B (strain ATCC BAA-1250 / SPB7) protein is Purine ribonucleoside efflux pump NepI.